The chain runs to 571 residues: Quinone-dependent D-lactate dehydrogenase (571 aa).

The FAD-binding PCMH-type domain occupies 44 to 273 (GGGPVFAVVR…FAVRTRTFPR (230 aa)). Residues 78-82 (ASNTG), 86-87 (GS), glycine 145, serine 152, glycine 162, and valine 263 contribute to the FAD site.

It belongs to the quinone-dependent D-lactate dehydrogenase family. Requires FAD as cofactor.

Its subcellular location is the cell membrane. The enzyme catalyses (R)-lactate + a quinone = a quinol + pyruvate. Its function is as follows. Catalyzes the oxidation of D-lactate to pyruvate. Also has weak activity with L-lactate and DL-2-hydroxybutyrate. Electrons derived from D-lactate oxidation enter the electron transport chain. Essential for growth with D-lactate as sole carbon and energy source. This chain is Quinone-dependent D-lactate dehydrogenase, found in Corynebacterium glutamicum (strain ATCC 13032 / DSM 20300 / JCM 1318 / BCRC 11384 / CCUG 27702 / LMG 3730 / NBRC 12168 / NCIMB 10025 / NRRL B-2784 / 534).